The chain runs to 519 residues: Aldehyde dehydrogenase X, mitochondrial (519 aa).

The transit peptide at 1 to 19 (MLTARLLLPRLLCLQGRTT) directs the protein to the mitochondrion. At lysine 53 the chain carries N6-acetyllysine. Position 54 is an N6-acetyllysine; alternate (lysine 54). Lysine 54 is modified (N6-succinyllysine; alternate). Lysine 83 carries the post-translational modification N6-succinyllysine. 264–269 (GSTEVG) lines the NAD(+) pocket. The active-site Proton acceptor is the glutamate 287. The Nucleophile role is filled by cysteine 321. Lysine 366, lysine 385, lysine 401, lysine 416, and lysine 428 each carry N6-acetyllysine; alternate. Lysine 366, lysine 385, lysine 401, lysine 416, and lysine 428 each carry N6-succinyllysine; alternate. Lysine 431 carries the post-translational modification N6-acetyllysine.

The protein belongs to the aldehyde dehydrogenase family. In terms of assembly, homotetramer.

The protein localises to the mitochondrion matrix. The catalysed reaction is an aldehyde + NAD(+) + H2O = a carboxylate + NADH + 2 H(+). Its pathway is alcohol metabolism; ethanol degradation; acetate from ethanol: step 2/2. ALDHs play a major role in the detoxification of alcohol-derived acetaldehyde. They are involved in the metabolism of corticosteroids, biogenic amines, neurotransmitters, and lipid peroxidation. In Mus musculus (Mouse), this protein is Aldehyde dehydrogenase X, mitochondrial (Aldh1b1).